A 698-amino-acid chain; its full sequence is MYKSFSMELAGRTLSVDVGRVAAQANGAAFMHYGDTVVLSTATASDKPREGIDFFPLSVEYEEKLYAVGKVPGGFNKREGKASENAILTSRVIDRPMRPLFPKDYRNDVTLNNLVMSVDPDCSPELTAMLGSAISVAISDIPFDGPCATTQVGLVDGELVFNPTAAQKAVSDLALTVASTRDKVIMIEAGANEVPEDKMLEAIFAAHEVNQEVIQFIDKIVAEFGKEKHGYISCEIPEEMFAAIKEVVTPEQMEEAVFTDVKQVREENIREIKNKLAEVFEESNPEWLHLIDEAVYKYQKKTVRKMILKDHKRPDGREIHQIRRLAAEVDMLPRVHGSGMFTRGQTQILTVTTLAPLSEAQKLDGLDEAEKSKRYMHHYNFPSYSVGETKPSRGPGRREIGHGALAERALIPVLPSEAEFPYAIRTVSETMESNGSTSQASVCASTLSLMAAGVPIKKQVAGISCGLVTGDTDDDYLVLTDIQGLEDFFGDMDFKVAGTHDGITAIQMDIKIHGLTRAIIEEAIRRTKEAREYIINEVMTPAIAEPRTEVGKYAPKIIQIQIDPQKIGDVVGQRGKTINAIIEQTGVKIDINDEGAVSVCGTDKDMMDKAINMIRTIVTEFEEGQVFEGKVISIKEFGAFLEFAPGKEGMVHISKISKERINHVEDVLTLGDVVKVVCLGKDKMGRISFSIKDYKEEN.

Mg(2+) contacts are provided by Asp487 and Asp493. Positions 555–614 (PKIIQIQIDPQKIGDVVGQRGKTINAIIEQTGVKIDINDEGAVSVCGTDKDMMDKAINMI) constitute a KH domain. The 69-residue stretch at 624-692 (GQVFEGKVIS…KMGRISFSIK (69 aa)) folds into the S1 motif domain.

This sequence belongs to the polyribonucleotide nucleotidyltransferase family. Requires Mg(2+) as cofactor.

The protein localises to the cytoplasm. The enzyme catalyses RNA(n+1) + phosphate = RNA(n) + a ribonucleoside 5'-diphosphate. Functionally, involved in mRNA degradation. Catalyzes the phosphorolysis of single-stranded polyribonucleotides processively in the 3'- to 5'-direction. The chain is Polyribonucleotide nucleotidyltransferase from Lachnoclostridium phytofermentans (strain ATCC 700394 / DSM 18823 / ISDg) (Clostridium phytofermentans).